Here is a 603-residue protein sequence, read N- to C-terminus: Cholinesterase (603 aa).

Residues 1–29 form the signal peptide; sequence MQTQHTKVTQTHFLLWILLLCMPFGKSHT. Asparagine 86 carries N-linked (GlcNAc...) asparagine glycosylation. Residues cysteine 94 and cysteine 121 are joined by a disulfide bond. A glycan (N-linked (GlcNAc...) asparagine) is linked at asparagine 135. 145-146 serves as a coordination point for substrate; it reads GG. Serine 227 serves as the catalytic Acyl-ester intermediate. Serine 227 carries the post-translational modification Phosphoserine. Asparagine 270 is a glycosylation site (N-linked (GlcNAc...) asparagine). Cysteine 281 and cysteine 292 are joined by a disulfide. Residue glutamate 354 is the Charge relay system of the active site. An N-linked (GlcNAc...) asparagine glycan is attached at asparagine 370. The cysteines at positions 429 and 548 are disulfide-linked. The Charge relay system role is filled by histidine 467. Residues asparagine 484, asparagine 510, and asparagine 515 are each glycosylated (N-linked (GlcNAc...) asparagine).

This sequence belongs to the type-B carboxylesterase/lipase family. In terms of assembly, homotetramer; disulfide-linked. Dimer of dimers. As to expression, present in most cells except erythrocytes.

It is found in the secreted. It catalyses the reaction an acylcholine + H2O = a carboxylate + choline + H(+). Esterase with broad substrate specificity. Contributes to the inactivation of the neurotransmitter acetylcholine. Can degrade neurotoxic organophosphate esters. This is Cholinesterase (Bche) from Mus musculus (Mouse).